We begin with the raw amino-acid sequence, 389 residues long: Dirigent protein 25 (389 aa).

An N-terminal signal peptide occupies residues 1–21; sequence MAGCKVLFFLILALAITFVSA. 3 stretches are compositionally biased toward low complexity: residues 50 to 68, 77 to 86, and 98 to 135; these read GPFPTANSGPATGIASGTG, LGTNTGPGPL, and SSGTLPVTGPGPLPTSSGLLPGASSGNLPGSGSGPLPT. The interval 50-135 is disordered; sequence GPFPTANSGP…PGSGSGPLPT (86 aa).

It belongs to the plant dirigent protein family. As to quaternary structure, homodimer.

It localises to the secreted. It is found in the extracellular space. The protein localises to the apoplast. Functionally, dirigent proteins impart stereoselectivity on the phenoxy radical-coupling reaction, yielding optically active lignans from two molecules of coniferyl alcohol in the biosynthesis of lignans, flavonolignans, and alkaloids and thus plays a central role in plant secondary metabolism. This Arabidopsis thaliana (Mouse-ear cress) protein is Dirigent protein 25 (DIR25).